We begin with the raw amino-acid sequence, 649 residues long: UvrABC system protein C (649 aa).

A GIY-YIG domain is found at 12–91 (SSPGVYLMKS…IKQHRPKYNI (80 aa)). In terms of domain architecture, UVR spans 201–236 (NEVARLYRSKMNLASEQMRYEDAARYRDLLRAIEVT). Positions 603–649 (RLHGGPLPNPPPPGEGAMGDGSIPSPRNGVMDDSIPSPSGRGWPKAG) are disordered.

This sequence belongs to the UvrC family. As to quaternary structure, interacts with UvrB in an incision complex.

The protein resides in the cytoplasm. The UvrABC repair system catalyzes the recognition and processing of DNA lesions. UvrC both incises the 5' and 3' sides of the lesion. The N-terminal half is responsible for the 3' incision and the C-terminal half is responsible for the 5' incision. The protein is UvrABC system protein C of Geobacter sp. (strain M21).